Here is a 120-residue protein sequence, read N- to C-terminus: uncharacterized protein (120 aa).

To M.tuberculosis Rv0026 and Rv0739.

This is an uncharacterized protein from Mycobacterium tuberculosis (strain CDC 1551 / Oshkosh).